Consider the following 290-residue polypeptide: Putative neuropeptide Y receptor type 6 (290 aa).

Residues 1 to 39 (MEVSLNHPASNTTSTKNNNSAFFYFESCQPPSPALLLLC) are Extracellular-facing. Residue N11 is glycosylated (N-linked (GlcNAc...) asparagine). Residues 40–60 (IAYTVVLIVGLFGNLSLIIII) traverse the membrane as a helical segment. The Cytoplasmic segment spans residues 61–83 (FKKQRKAQNFTSILIANLSLSDT). The helical transmembrane segment at 84–104 (LVCVMCIHFTIIYTLMDHWIF) threads the bilayer. Residues 105–111 (GDTMCRL) lie on the Extracellular side of the membrane. A disulfide bridge connects residues C109 and C196. A helical transmembrane segment spans residues 112 to 132 (TSYVQSVSISVSIFSLVFTAV). The Cytoplasmic portion of the chain corresponds to 133 to 150 (ERYQLIVNPRGWKPSVTH). Residues 151–171 (AYWGITLIWLFSLLLSIPFFL) form a helical membrane-spanning segment. Residues 172–206 (SYHLTDEPFRNLSLPTDLYTHQVACVENWPSKKDR) are Extracellular-facing. A helical membrane pass occupies residues 207–227 (LLFTTSLFLLQYFVPLGFILI). Over 228 to 258 (CYLKIVICLRRRNAKVDKKKENEGRLNENKR) the chain is Cytoplasmic. A helical transmembrane segment spans residues 259-279 (INTMLISIVVTFGACWLPRIS). The Extracellular segment spans residues 280–290 (SMSSLTGIMRC).

The protein belongs to the G-protein coupled receptor 1 family. As to expression, expressed in heart, skeletal muscle, gastrointestinal tissues, spleen, brain and adrenal glands.

The protein localises to the membrane. Its function is as follows. When expressed, is unable to bind pancreatic polypeptide (PP), neuropeptide Y (NPY), or peptide YY (PYY), suggesting that either it is functionally inactive or that it may have acquired a pancreatic polypeptide-independent function. This Homo sapiens (Human) protein is Putative neuropeptide Y receptor type 6 (NPY6R).